Here is a 990-residue protein sequence, read N- to C-terminus: Protein SUPPRESSOR OF MAX2 1 (990 aa).

The Clp R domain maps to 8–167; it reads IQQTLTPEAA…KATIEQSLNN (160 aa). Repeat regions lie at residues 12–83 and 96–167; these read LTPE…LERL and ISNA…SLNN. The disordered stretch occupies residues 818–855; that stretch reads PKKEHGSGLSFDLNQAADTDDGSHNTSDLTTDNDQDEQ. An EAR motif is present at residues 828-832; the sequence is FDLNQ.

The protein belongs to the ClpA/ClpB family. In terms of assembly, interacts probably with TPL/TPR in an EAR-motif dependent manner. Interacts with TPL, TPR1, TPR2 and TPR4. Highly expressed in dry seeds. Expressed in seedlings, rosette leaves and senescing leaves. Detected in roots and axillary shoots. Expressed in the primary rosette buds and expanding leaves of adult rosettes, the vasculature of the hypocotyls, cotyledons, and mature roots, in the midvein and petioles of young leaves, the young leaf periphery, stomata, and the root caps.

Probable component of a transcriptional corepressor complex that acts downstream of MAX2 to negatively regulate karrikins/strigolactone responses. Probable target of MAX2 during germination and seedling photomorphogenesis. Acts probably specifically in the karrikin pathway. The chain is Protein SUPPRESSOR OF MAX2 1 from Arabidopsis thaliana (Mouse-ear cress).